Consider the following 303-residue polypeptide: Ribonuclease HIII (303 aa).

Residues 89-303 (WSVLGSDEVG…ANTKKAERLL (215 aa)) enclose the RNase H type-2 domain. The a divalent metal cation site is built by Asp95, Glu96, and Asp199.

Belongs to the RNase HII family. RnhC subfamily. It depends on Mn(2+) as a cofactor. Mg(2+) serves as cofactor.

The protein resides in the cytoplasm. The enzyme catalyses Endonucleolytic cleavage to 5'-phosphomonoester.. Functionally, endonuclease that specifically degrades the RNA of RNA-DNA hybrids. The chain is Ribonuclease HIII from Leuconostoc mesenteroides subsp. mesenteroides (strain ATCC 8293 / DSM 20343 / BCRC 11652 / CCM 1803 / JCM 6124 / NCDO 523 / NBRC 100496 / NCIMB 8023 / NCTC 12954 / NRRL B-1118 / 37Y).